The primary structure comprises 204 residues: MRLPDPYTNPEYPGLGFESVNLVDNDPMIRDELPNGKVKEVKISAQYWGINISYPELFPDEYAFLDSRLLEYKRTGDYLDVLLPQYEAFRVRGDTKSVTIPAGQKGSQIILNTNGTLTGQPKAGDLFKLSTHPKVYKITNFSSSGNVWNISLYPDLFITTTGSEKPVFNGILFRTKLMNGDSFGSTLNNNGTYSGISLSLRESL.

Homohexamer. Interacts with baseplate tube protein p140 and baseplate hub protein pb3.

Its subcellular location is the virion. In terms of biological role, forms the simplified baseplate, together with the p132 collar protein, the baseplate tube protein p140 and baseplate hub protein pb3. In Escherichia phage T5 (Enterobacteria phage T5), this protein is Distal tail protein pb9 (D16).